The sequence spans 378 residues: Putative dioxygenase VC_1345 (378 aa).

Fe cation is bound by residues His288, Asp294, and His324.

The protein belongs to the homogentisate dioxygenase family. The cofactor is Fe cation.

This is Putative dioxygenase VC_1345 from Vibrio cholerae serotype O1 (strain ATCC 39315 / El Tor Inaba N16961).